The primary structure comprises 367 residues: Protein SUPPRESSOR OF FRI 4 (367 aa).

A BED-type zinc finger spans residues Arg7–Val66. Zn(2+) contacts are provided by Cys38, Cys41, His54, and His59. The disordered stretch occupies residues Pro246–Ser309. A compositionally biased stretch (polar residues) spans Pro273 to Pro295.

As to quaternary structure, homodimer. Component of the transcription activator complex FRI-C composed of FRI, FRL1, SUF4, FLX and FES1. Interacts with LD, ASHH2, FRL1, (via C-terminus) with FRI (via C-terminus), and with SWC6, a component of the SWR1 chromatin-remodeling complex. Binds to MED18 to regulate flowering time; recruits MED18 to FLC promoter. Expressed in root, shoot apex, leaves, stem and flowers. Expressed in expanding leaves, in the vasculature of fully expanded leaves, in the inflorescence, throughout young floral primordia, in the carpels of older flowers and in fertilized ovules.

The protein localises to the nucleus. Functionally, sequence-specific DNA binding factor that recognizes the 5'-CCAAATTTTAAGTTT-3' sequence. Recruits the FRI-C complex to the FLC promoter. Required for FRI-mediated FLC activation, but has no effect on the expression of MAF1, MAF2, MAF3, MAF5, UFC and CO. Dispensable for the reactivation of FLC in early embryogenesis, but required to maintain high levels of FLC expression in later embryonic and vegetative development. This is Protein SUPPRESSOR OF FRI 4 from Arabidopsis thaliana (Mouse-ear cress).